The chain runs to 465 residues: uncharacterized protein (465 aa).

The region spanning methionine 1–serine 50 is the TRAM domain. Cysteine 63, cysteine 69, cysteine 72, and cysteine 168 together coordinate [4Fe-4S] cluster. The S-adenosyl-L-methionine site is built by glutamine 293, tyrosine 322, glutamate 343, and aspartate 392. Catalysis depends on cysteine 419, which acts as the Nucleophile.

This sequence belongs to the class I-like SAM-binding methyltransferase superfamily. RNA M5U methyltransferase family.

This is an uncharacterized protein from Porphyromonas gingivalis (strain ATCC BAA-308 / W83).